The chain runs to 443 residues: Thymidine phosphorylase (443 aa).

This sequence belongs to the thymidine/pyrimidine-nucleoside phosphorylase family. In terms of assembly, homodimer.

It carries out the reaction thymidine + phosphate = 2-deoxy-alpha-D-ribose 1-phosphate + thymine. It functions in the pathway pyrimidine metabolism; dTMP biosynthesis via salvage pathway; dTMP from thymine: step 1/2. In terms of biological role, the enzymes which catalyze the reversible phosphorolysis of pyrimidine nucleosides are involved in the degradation of these compounds and in their utilization as carbon and energy sources, or in the rescue of pyrimidine bases for nucleotide synthesis. The protein is Thymidine phosphorylase of Shewanella sediminis (strain HAW-EB3).